The chain runs to 534 residues: Phosphoenolpyruvate carboxykinase (ATP) (534 aa).

3 residues coordinate substrate: Arg59, Tyr200, and Lys206. Residues Lys206, His225, and Gly242–Thr250 contribute to the ATP site. Mn(2+) is bound by residues Lys206 and His225. Position 263 (Asp263) interacts with Mn(2+). ATP-binding positions include Glu291, Arg327, Arg443–Ile444, and Thr449. Arg327 contacts substrate.

It belongs to the phosphoenolpyruvate carboxykinase (ATP) family. It depends on Mn(2+) as a cofactor.

It localises to the cytoplasm. The catalysed reaction is oxaloacetate + ATP = phosphoenolpyruvate + ADP + CO2. Its pathway is carbohydrate biosynthesis; gluconeogenesis. Its function is as follows. Involved in the gluconeogenesis. Catalyzes the conversion of oxaloacetate (OAA) to phosphoenolpyruvate (PEP) through direct phosphoryl transfer between the nucleoside triphosphate and OAA. In Agathobacter rectalis (strain ATCC 33656 / DSM 3377 / JCM 17463 / KCTC 5835 / VPI 0990) (Eubacterium rectale), this protein is Phosphoenolpyruvate carboxykinase (ATP).